Consider the following 393-residue polypeptide: Short-chain dehydrogenase/reductase family 42E member 1 (393 aa).

The Proton acceptor role is filled by tyrosine 152. Lysine 156 is a binding site for NAD(+). A run of 2 helical transmembrane segments spans residues 282-302 and 371-391; these read LPLT…FILG and GLVI…SVIL.

Belongs to the 3-beta-HSD family.

The protein resides in the membrane. The polypeptide is Short-chain dehydrogenase/reductase family 42E member 1 (SDR42E1) (Bos taurus (Bovine)).